The primary structure comprises 179 residues: Peptide deformylase (179 aa).

Positions 102 and 144 each coordinate Fe cation. The active site involves glutamate 145. Histidine 148 provides a ligand contact to Fe cation.

The protein belongs to the polypeptide deformylase family. It depends on Fe(2+) as a cofactor.

The enzyme catalyses N-terminal N-formyl-L-methionyl-[peptide] + H2O = N-terminal L-methionyl-[peptide] + formate. Its function is as follows. Removes the formyl group from the N-terminal Met of newly synthesized proteins. Requires at least a dipeptide for an efficient rate of reaction. N-terminal L-methionine is a prerequisite for activity but the enzyme has broad specificity at other positions. This chain is Peptide deformylase, found in Wolbachia sp. subsp. Brugia malayi (strain TRS).